The sequence spans 403 residues: TPR repeat-containing protein Synpcc7942_0270 (403 aa).

TPR repeat units lie at residues 208 to 243, 244 to 282, 283 to 316, 317 to 350, and 351 to 387; these read AYLC…PEPA, VRYE…AIHK, LGAW…APQA, TVAL…DPND, and PSLY…QGSP.

In Synechococcus elongatus (strain ATCC 33912 / PCC 7942 / FACHB-805) (Anacystis nidulans R2), this protein is TPR repeat-containing protein Synpcc7942_0270.